Reading from the N-terminus, the 157-residue chain is Protein Smg homolog (157 aa).

It belongs to the Smg family.

The protein is Protein Smg homolog of Aeromonas hydrophila subsp. hydrophila (strain ATCC 7966 / DSM 30187 / BCRC 13018 / CCUG 14551 / JCM 1027 / KCTC 2358 / NCIMB 9240 / NCTC 8049).